A 413-amino-acid polypeptide reads, in one-letter code: Argininosuccinate synthase (413 aa).

8-16 (AYSGGLDTS) is a binding site for ATP. Tyrosine 87 contacts L-citrulline. Glycine 117 provides a ligand contact to ATP. Residues threonine 119, asparagine 123, and aspartate 124 each contribute to the L-aspartate site. Asparagine 123 contributes to the L-citrulline binding site. L-citrulline-binding residues include arginine 127, serine 175, glutamate 259, and tyrosine 271.

It belongs to the argininosuccinate synthase family. Type 1 subfamily. Homotetramer.

Its subcellular location is the cytoplasm. The catalysed reaction is L-citrulline + L-aspartate + ATP = 2-(N(omega)-L-arginino)succinate + AMP + diphosphate + H(+). Its pathway is amino-acid biosynthesis; L-arginine biosynthesis; L-arginine from L-ornithine and carbamoyl phosphate: step 2/3. This Micrococcus luteus (strain ATCC 4698 / DSM 20030 / JCM 1464 / CCM 169 / CCUG 5858 / IAM 1056 / NBRC 3333 / NCIMB 9278 / NCTC 2665 / VKM Ac-2230) (Micrococcus lysodeikticus) protein is Argininosuccinate synthase.